Here is a 293-residue protein sequence, read N- to C-terminus: SAGA-associated factor 29 (293 aa).

Residues 3 to 88 are a coiled coil; it reads LVSADSRIAE…KALDKIAEIK (86 aa). The SGF29 C-terminal domain occupies 152-293; sequence GDYVARPGDK…VVACKEPKKK (142 aa). 2 histone H3K4me3 N-terminus binding regions span residues 194 to 196 and 240 to 243; these read DID and QTTC. A histone H3K4me3 binding region spans residues 264 to 266; the sequence is FED. Position 288 is an N6-acetyllysine (Lys-288).

The protein belongs to the SGF29 family. As to quaternary structure, interacts with dimethylated and trimethylated 'Lys-4' of histone H3 (H3K4me2 and H3K4me3), with a preference for the trimethylated form (H3K4me3). Component of some SAGA-type complexes. Component of the ADA2A-containing complex (ATAC), composed of KAT14, KAT2A, TADA2L, TADA3L, ZZ3, MBIP, WDR5, YEATS2, CCDC101 and DR1. Interacts with (methylated) CGAS. Interacts with TADA3L, GCN5L2, SUPT3H and MYC.

Its subcellular location is the nucleus. Functionally, chromatin reader component of some histone acetyltransferase (HAT) SAGA-type complexes like the TFTC-HAT, ATAC or STAGA complexes. SGF29 specifically recognizes and binds methylated 'Lys-4' of histone H3 (H3K4me), with a preference for trimethylated form (H3K4me3). In the SAGA-type complexes, SGF29 is required to recruit complexes to H3K4me. Involved in the response to endoplasmic reticulum (ER) stress by recruiting the SAGA complex to H3K4me, thereby promoting histone H3 acetylation and cell survival. Also binds non-histone proteins that are methylated on Lys residues: specifically recognizes and binds CGAS monomethylated on 'Lys-506'. The chain is SAGA-associated factor 29 from Homo sapiens (Human).